Consider the following 224-residue polypeptide: Cytidylate kinase (224 aa).

Position 14–22 (14–22) interacts with ATP; the sequence is GPAGSGKST.

Belongs to the cytidylate kinase family. Type 1 subfamily.

It is found in the cytoplasm. The enzyme catalyses CMP + ATP = CDP + ADP. It carries out the reaction dCMP + ATP = dCDP + ADP. This chain is Cytidylate kinase, found in Mycoplasmoides gallisepticum (strain R(low / passage 15 / clone 2)) (Mycoplasma gallisepticum).